A 709-amino-acid chain; its full sequence is MWWGGRGQSFNIAPQKEEPEMGSVQENRMPEPRSRQPSSCLASRCLPGEQILAWAPGVRKGLEPELSGTLICTNFRVTFQPCGWQWNQDTPLNSEYDFALVNIGRLEAVSGLSRVQLLRPGSLHKFIPEEILIHGRDFRLLRVGFEAGGLEPQAFQVTMAIVQARAQSNQAQQYSGITLSKAGQGSGSRKPPIPLMETAEDWETERKKQAARGWRVSTVNERFDVATSLPRYFWVPNRILDSEVRRAFGHFHQGRGPRLSWHHPGGSDLLRCGGFYTASDPNKEDIRAVELMLQAGHSDVVLVDTMDELPSLADVQLAHLRLRALCLPDSSVAEDKWLSALEGTRWLDYVRACLRKASDISVLVTSRVRSVILQERGDRDLNGLLSSLVQLLSAPEARTLFGFQSLVQREWVAAGHPFLTRLGGTGASEEAPVFLLFLDCVWQLLQQFPADFEFSEFFLLALHDSVRVPDTLTFLRNTPWERGKQSGQLNSYTQVYTPGYSQPPAGNSFNLQLSVWDWDLRYSNAQILQFQNPGYDPEHCPDSWLPRPQPSFMVPGPPSSVWLFSRGALTPLNQLCPWRDSPSLLAVSSRWLPRPAISSESLADQEWGLPSHWGACPLPPGLLLPGYLGPQIRLWRRCYLRGRPEVQMGLSAPTISGLQDELSHLQELLRKWTPRISPEDHSKKRDPHTILNPTEIAGILKGRAEGDLG.

The segment at 1–39 is disordered; the sequence is MWWGGRGQSFNIAPQKEEPEMGSVQENRMPEPRSRQPSS. One can recognise a Myotubularin phosphatase domain in the interval 196-639; it reads METAEDWETE…PQIRLWRRCY (444 aa).

Belongs to the protein-tyrosine phosphatase family. Non-receptor class myotubularin subfamily. As to expression, expressed in bone marrow, spleen and thymus.

The chain is Myotubularin-related protein 11 (MTMR11) from Homo sapiens (Human).